We begin with the raw amino-acid sequence, 1416 residues long: Telomere-associated protein RIF1 (1416 aa).

Disordered stretches follow at residues 789 to 858 (PIRK…PVVQ), 886 to 984 (PEVA…HLTG), 1021 to 1054 (ARAQDRAEQVSTPTSELNELTGTDHTSTPIQAPP), and 1166 to 1186 (TARTATTDKSLDKSTGEAPEE). Positions 928-945 (GSSGDPAASAGAVAAGEM) are enriched in low complexity. Over residues 1029–1050 (QVSTPTSELNELTGTDHTSTPI) the composition is skewed to polar residues.

The protein belongs to the RIF1 family. Highly divergent. Interacts with Pp1-87b. Interacts with SuUR (via SNF2-like region). Phosphorylated, probably by Cdk1; phosphorylation regulates dissociation from heterochromatin. Expressed in nurse cells and follicle cells in the adult female (at protein level). Detected in adult at extremely low levels.

It localises to the nucleus. It is found in the chromosome. The protein resides in the telomere. Functionally, regulates the timing of initiation of DNA replication. Functions in copy number control by promoting the underreplication of DNA, which is found in many late replicating euchromatic regions of salivary gland polytene chromosomes. Promotes underreplication by localizing to active DNA replication forks in a partially SuUR-dependent manner, and inhibiting replication fork progression. Might also work as an adapter to recruit Pp1-87B to multiple sites on the chromosome and may function with Pp1-87B to mediate underreplication. Plays an essential role in embryonic development, in the transition from larvae to pupae and, probably, in proliferating tissues later on. In embryos, during mid-blastula transition, binds to and selectively delays the replication of large blocks of repetitive DNA satellite sequences during S phase in response to the activity of Cdk1; maternal Rif1 is specifically required for the normal extension of S phase 14. Unlike mammalian orthologs, does not appear to play a role in DNA damage repair. This chain is Telomere-associated protein RIF1, found in Drosophila melanogaster (Fruit fly).